Here is a 167-residue protein sequence, read N- to C-terminus: Leptin (167 aa).

A signal peptide spans 1 to 21 (MRCGPLCRFLWLWPYLSCVEA). Residues cysteine 117 and cysteine 167 are joined by a disulfide bond.

This sequence belongs to the leptin family.

Its subcellular location is the secreted. Its function is as follows. Key player in the regulation of energy balance and body weight control. Once released into the circulation, has central and peripheral effects by binding LEPR, found in many tissues, which results in the activation of several major signaling pathways. In the hypothalamus, acts as an appetite-regulating factor that induces a decrease in food intake and an increase in energy consumption by inducing anorexinogenic factors and suppressing orexigenic neuropeptides, also regulates bone mass and secretion of hypothalamo-pituitary-adrenal hormones. In the periphery, increases basal metabolism, influences reproductive function, regulates pancreatic beta-cell function and insulin secretion, is pro-angiogenic for endothelial cell and affects innate and adaptive immunity. In the arcuate nucleus of the hypothalamus, activates by depolarization POMC neurons inducing FOS and SOCS3 expression to release anorexigenic peptides and inhibits by hyperpolarization NPY neurons inducing SOCS3 with a consequent reduction on release of orexigenic peptides. In addition to its known satiety inducing effect, has a modulatory role in nutrient absorption. In the intestine, reduces glucose absorption by enterocytes by activating PKC and leading to a sequential activation of p38, PI3K and ERK signaling pathways which exerts an inhibitory effect on glucose absorption. Acts as a growth factor on certain tissues, through the activation of different signaling pathways increases expression of genes involved in cell cycle regulation such as CCND1, via JAK2-STAT3 pathway, or VEGFA, via MAPK1/3 and PI3K-AKT1 pathways. May also play an apoptotic role via JAK2-STAT3 pathway and up-regulation of BIRC5 expression. Pro-angiogenic, has mitogenic activity on vascular endothelial cells and plays a role in matrix remodeling by regulating the expression of matrix metalloproteinases (MMPs) and tissue inhibitors of metalloproteinases (TIMPs). In innate immunity, modulates the activity and function of neutrophils by increasing chemotaxis and the secretion of oxygen radicals. Increases phagocytosis by macrophages and enhances secretion of pro-inflammatory mediators. Increases cytotoxic ability of NK cells. Plays a pro-inflammatory role, in synergy with IL1B, by inducing NOS2 which promotes the production of IL6, IL8 and Prostaglandin E2, through a signaling pathway that involves JAK2, PI3K, MAP2K1/MEK1 and MAPK14/p38. In adaptive immunity, promotes the switch of memory T-cells towards T helper-1 cell immune responses. Increases CD4(+)CD25(-) T-cell proliferation and reduces autophagy during TCR (T-cell receptor) stimulation, through MTOR signaling pathway activation and BCL2 up-regulation. In Canis lupus familiaris (Dog), this protein is Leptin (LEP).